The chain runs to 462 residues: ATP synthase subunit beta (462 aa).

An ATP-binding site is contributed by 152-159; sequence GGAGVGKT.

This sequence belongs to the ATPase alpha/beta chains family. In terms of assembly, F-type ATPases have 2 components, CF(1) - the catalytic core - and CF(0) - the membrane proton channel. CF(1) has five subunits: alpha(3), beta(3), gamma(1), delta(1), epsilon(1). CF(0) has three main subunits: a(1), b(2) and c(9-12). The alpha and beta chains form an alternating ring which encloses part of the gamma chain. CF(1) is attached to CF(0) by a central stalk formed by the gamma and epsilon chains, while a peripheral stalk is formed by the delta and b chains.

The protein resides in the cell inner membrane. It catalyses the reaction ATP + H2O + 4 H(+)(in) = ADP + phosphate + 5 H(+)(out). Functionally, produces ATP from ADP in the presence of a proton gradient across the membrane. The catalytic sites are hosted primarily by the beta subunits. This is ATP synthase subunit beta from Tolumonas auensis (strain DSM 9187 / NBRC 110442 / TA 4).